A 363-amino-acid polypeptide reads, in one-letter code: tRNA dimethylallyltransferase (363 aa).

ATP is bound at residue 65–72 (GPTASGKS). Residue 67-72 (TASGKS) coordinates substrate. Interaction with substrate tRNA regions lie at residues 90–93 (DSMQ) and 214–218 (QRLIR).

The protein belongs to the IPP transferase family. As to quaternary structure, monomer. It depends on Mg(2+) as a cofactor.

It catalyses the reaction adenosine(37) in tRNA + dimethylallyl diphosphate = N(6)-dimethylallyladenosine(37) in tRNA + diphosphate. Its function is as follows. Catalyzes the transfer of a dimethylallyl group onto the adenine at position 37 in tRNAs that read codons beginning with uridine, leading to the formation of N6-(dimethylallyl)adenosine (i(6)A). This Rickettsia massiliae (strain Mtu5) protein is tRNA dimethylallyltransferase.